Reading from the N-terminus, the 255-residue chain is Type III pantothenate kinase (255 aa).

6 to 13 (DVGNTNIV) contributes to the ATP binding site. Substrate is bound by residues Tyr100 and 107–110 (GADR). Asp109 functions as the Proton acceptor in the catalytic mechanism. Residue Asp129 participates in K(+) binding. Residue Thr132 participates in ATP binding. Thr184 is a binding site for substrate.

This sequence belongs to the type III pantothenate kinase family. In terms of assembly, homodimer. It depends on NH4(+) as a cofactor. Requires K(+) as cofactor.

The protein resides in the cytoplasm. It carries out the reaction (R)-pantothenate + ATP = (R)-4'-phosphopantothenate + ADP + H(+). It functions in the pathway cofactor biosynthesis; coenzyme A biosynthesis; CoA from (R)-pantothenate: step 1/5. Catalyzes the phosphorylation of pantothenate (Pan), the first step in CoA biosynthesis. The polypeptide is Type III pantothenate kinase (Thermoanaerobacter sp. (strain X514)).